Reading from the N-terminus, the 258-residue chain is Apolipoprotein E (258 aa).

The first 19 residues, 1–19, serve as a signal peptide directing secretion; sequence MRVWTVLLGAVLLLAACQA. 3 repeat units span residues 112–133, 134–155, and 156–173. The tract at residues 112–173 is 3 X 22 AA approximate tandem repeats; it reads VDMEEAKTRV…KLEAYSKEAT (62 aa).

This sequence belongs to the apolipoprotein A1/A4/E family. In terms of assembly, homotetramer.

It localises to the secreted. Its subcellular location is the extracellular space. It is found in the extracellular matrix. APOE is an apolipoprotein, a protein associating with lipid particles, that mainly functions in lipoprotein-mediated lipid transport between organs via the plasma and interstitial fluids. APOE is a core component of plasma lipoproteins and is involved in their production, conversion and clearance. Apolipoproteins are amphipathic molecules that interact both with lipids of the lipoprotein particle core and the aqueous environment of the plasma. The polypeptide is Apolipoprotein E (APOE) (Alligator mississippiensis (American alligator)).